The primary structure comprises 130 residues: Small ribosomal subunit protein uS9 (130 aa).

This sequence belongs to the universal ribosomal protein uS9 family.

The sequence is that of Small ribosomal subunit protein uS9 from Polaromonas naphthalenivorans (strain CJ2).